The sequence spans 281 residues: Bifunctional protein FolD (281 aa).

Residues 165–167 and serine 190 each bind NADP(+); that span reads GRS.

Belongs to the tetrahydrofolate dehydrogenase/cyclohydrolase family. Homodimer.

The catalysed reaction is (6R)-5,10-methylene-5,6,7,8-tetrahydrofolate + NADP(+) = (6R)-5,10-methenyltetrahydrofolate + NADPH. The enzyme catalyses (6R)-5,10-methenyltetrahydrofolate + H2O = (6R)-10-formyltetrahydrofolate + H(+). Its pathway is one-carbon metabolism; tetrahydrofolate interconversion. Catalyzes the oxidation of 5,10-methylenetetrahydrofolate to 5,10-methenyltetrahydrofolate and then the hydrolysis of 5,10-methenyltetrahydrofolate to 10-formyltetrahydrofolate. In Polaromonas sp. (strain JS666 / ATCC BAA-500), this protein is Bifunctional protein FolD.